The chain runs to 317 residues: Uridylate kinase (317 aa).

9–12 (KISG) contacts ATP. Position 49 (Gly49) interacts with UMP. ATP contacts are provided by Gly50 and Arg54. Residues Asp69 and 130–137 (TGRPYFTT) contribute to the UMP site. Residues Asn158, Tyr164, and Asp167 each contribute to the ATP site.

The protein belongs to the UMP kinase family. As to quaternary structure, homohexamer.

It localises to the cytoplasm. The catalysed reaction is UMP + ATP = UDP + ADP. The protein operates within pyrimidine metabolism; CTP biosynthesis via de novo pathway; UDP from UMP (UMPK route): step 1/1. With respect to regulation, inhibited by UTP. Catalyzes the reversible phosphorylation of UMP to UDP. This is Uridylate kinase from Malacoplasma penetrans (strain HF-2) (Mycoplasma penetrans).